An 82-amino-acid polypeptide reads, in one-letter code: MPNIKSAKKDLRRSRAAAVRNRAQRSALRTAVKKARVATAAAADHLTAVSLLDRAARKGLIHRNAAARVKSRLAKQAAASAA.

Residues 1 to 29 (MPNIKSAKKDLRRSRAAAVRNRAQRSALR) form a disordered region. The segment covering 16–29 (AAAVRNRAQRSALR) has biased composition (low complexity).

This sequence belongs to the bacterial ribosomal protein bS20 family.

Its function is as follows. Binds directly to 16S ribosomal RNA. The polypeptide is Small ribosomal subunit protein bS20 (Gemmatimonas aurantiaca (strain DSM 14586 / JCM 11422 / NBRC 100505 / T-27)).